The primary structure comprises 632 residues: tRNA uridine 5-carboxymethylaminomethyl modification enzyme MnmG (632 aa).

FAD is bound at residue G15–G20. A disordered region spans residues P205–Y231. Positions K216 to H228 are enriched in basic and acidic residues. G276 to F290 is a binding site for NAD(+).

It belongs to the MnmG family. In terms of assembly, homodimer. Heterotetramer of two MnmE and two MnmG subunits. The cofactor is FAD.

Its subcellular location is the cytoplasm. NAD-binding protein involved in the addition of a carboxymethylaminomethyl (cmnm) group at the wobble position (U34) of certain tRNAs, forming tRNA-cmnm(5)s(2)U34. In Lactobacillus johnsonii (strain CNCM I-12250 / La1 / NCC 533), this protein is tRNA uridine 5-carboxymethylaminomethyl modification enzyme MnmG.